The sequence spans 141 residues: Nucleoside diphosphate kinase (141 aa).

Residues Lys-11, Phe-59, Arg-87, Thr-93, Arg-104, and Asn-114 each coordinate ATP. His-117 (pros-phosphohistidine intermediate) is an active-site residue.

The protein belongs to the NDK family. In terms of assembly, homotetramer. It depends on Mg(2+) as a cofactor.

The protein localises to the cytoplasm. It catalyses the reaction a 2'-deoxyribonucleoside 5'-diphosphate + ATP = a 2'-deoxyribonucleoside 5'-triphosphate + ADP. It carries out the reaction a ribonucleoside 5'-diphosphate + ATP = a ribonucleoside 5'-triphosphate + ADP. Major role in the synthesis of nucleoside triphosphates other than ATP. The ATP gamma phosphate is transferred to the NDP beta phosphate via a ping-pong mechanism, using a phosphorylated active-site intermediate. This Vibrio vulnificus (strain CMCP6) protein is Nucleoside diphosphate kinase.